Consider the following 421-residue polypeptide: Synaptotagmin-12 (421 aa).

Over 1–18 (MAVDVTEYHLSVIKSPPG) the chain is Vesicular. The helical transmembrane segment at 19-39 (WEVGVYAAGALALLGIAAVSL) threads the bilayer. Topologically, residues 40–421 (WKLWTSGSFP…VSMWHPVRRN (382 aa)) are cytoplasmic. The residue at position 97 (serine 97) is a Phosphoserine; by PKA. A phosphoserine mark is found at serine 99 and serine 214. C2 domains follow at residues 152 to 272 (TLGQ…SGWL) and 283 to 416 (AVGE…SMWH).

The protein belongs to the synaptotagmin family. In terms of assembly, homodimer. Can also form heterodimers. Interacts with SYT1. Post-translationally, phosphorylation of Ser-97 is required for mossy-fiber long-term potentiation. In terms of tissue distribution, expressed in the brain, specifically in neurons of the cerebellum, cortex, hippocampus, olfactory bulb, brainstem and spinal cord (at protein level).

It localises to the cytoplasmic vesicle. Its subcellular location is the secretory vesicle. It is found in the synaptic vesicle membrane. Synaptic vesicle phosphoprotein that enhances spontaneous neurotransmitter release but does not effect induced neurotransmitter release. Unlike other synaptotagmins, it does not bind Ca(2+) or phospholipids. Essential for mossy-fiber long-term potentiation in the hippocampus. The protein is Synaptotagmin-12 of Rattus norvegicus (Rat).